The primary structure comprises 990 residues: Aconitate hydratase 3, mitochondrial (990 aa).

Residues 1 to 78 (MYLTASSSAS…PFRFTSQIRA (78 aa)) constitute a mitochondrion transit peptide. Ser-91 is modified (phosphoserine). Residues Gln-182 and 301–303 (DSH) contribute to the substrate site. The [4Fe-4S] cluster site is built by Cys-533, Cys-599, and Cys-602. Residues Arg-632, Arg-637, Arg-795, and 876–877 (SR) contribute to the substrate site.

It belongs to the aconitase/IPM isomerase family. As to quaternary structure, monomer. Interacts with B'GAMMA in the cytosol. The cofactor is [4Fe-4S] cluster. Phosphorylated at Ser-91 in the cytoplasm; this phosphorylation requires the presence of B'GAMMA. In terms of tissue distribution, major aconitase isoenzyme in young seedlings. Expressed in roots, leaves, stems and flowers, and, at low levels, in seeds.

Its subcellular location is the mitochondrion. It is found in the cytoplasm. The catalysed reaction is citrate = D-threo-isocitrate. It participates in carbohydrate metabolism; tricarboxylic acid cycle; isocitrate from oxaloacetate: step 2/2. In terms of biological role, catalyzes the isomerization of citrate to isocitrate via cis-aconitate. Contributes to oxidative stress tolerance. Modulates cytosolic citrate metabolism during lipid mobilization. Required during seedling growth. The protein is Aconitate hydratase 3, mitochondrial of Arabidopsis thaliana (Mouse-ear cress).